The primary structure comprises 70 residues: Small ribosomal subunit protein bS21 (70 aa).

This sequence belongs to the bacterial ribosomal protein bS21 family.

The protein is Small ribosomal subunit protein bS21 (rpsU) of Helicobacter pylori (strain J99 / ATCC 700824) (Campylobacter pylori J99).